The chain runs to 175 residues: Ribosome maturation factor RimP (175 aa).

The disordered stretch occupies residues Glu-152 to Ala-175. The span at Pro-160–Ala-175 shows a compositional bias: acidic residues.

Belongs to the RimP family.

It localises to the cytoplasm. In terms of biological role, required for maturation of 30S ribosomal subunits. The chain is Ribosome maturation factor RimP from Nocardioides sp. (strain ATCC BAA-499 / JS614).